We begin with the raw amino-acid sequence, 1073 residues long: Pleckstrin homology domain-containing family G member 5 (1073 aa).

Disordered regions lie at residues 1-28 (MGTGPGVSGRRAAARPSSELPSPDSQLL), 91-135 (VSTR…ARRR), 217-261 (PGDE…ESSL), 278-309 (GEAGIPGHEPPAPSSCSLPVGSSGGTSSGINE), and 367-388 (SWEEEEEDDEEDEESSGLRLED). 2 stretches are compositionally biased toward basic and acidic residues: residues 217-231 (PGDEGKVEQGVKDSK) and 249-260 (ERVDPQSRRESS). Residues 367–381 (SWEEEEEDDEEDEES) show a composition bias toward acidic residues. Residues 406 to 598 (HQQEAVWELL…ERFIHHVNTC (193 aa)) form the DH domain. A PH domain is found at 654 to 754 (QLLLEGSLRM…WVDTIYNAQN (101 aa)). 3 disordered regions span residues 762–818 (QLSA…TSDG), 833–873 (TLSS…GPVD), and 899–925 (PVVEPAPVPQTPSPQPSPRLRRRTPVQ). Acidic residues predominate over residues 777–790 (LEEEEDEQEEEGEE). 2 stretches are compositionally biased toward polar residues: residues 791-809 (SGTSAASSPTILRKSSNSL) and 844-864 (VSSQSDESSLSNTASSVTPTS). T793 carries the post-translational modification Phosphothreonine. A Phosphoserine modification is found at S798. Pro residues predominate over residues 900-915 (VVEPAPVPQTPSPQPS). At T909 the chain carries Phosphothreonine. S911, S936, and S941 each carry phosphoserine. Residues 993-1046 (MCDPCHGPQLSESENRPSHMTGGPADSARRRCREMPSGTMSRVQSEPPSGVSAQ) form a disordered region. The span at 1030-1039 (GTMSRVQSEP) shows a compositional bias: polar residues.

Interacts with GIPC1/synectin and RHOA. In terms of tissue distribution, expressed in neurons and glial cells of the peripheral nervous system, with highest levels of expression in the brain and sciatic nerve endoneurium. Isoform 2 is expressed at detectable levels only in malignant cells.

The protein localises to the cytoplasm. Its subcellular location is the perinuclear region. The protein resides in the cell membrane. It is found in the cell junction. It localises to the cell projection. The protein localises to the lamellipodium. In terms of biological role, functions as a guanine exchange factor (GEF) for RAB26 and thus regulates autophagy of synaptic vesicles in axon terminal of motoneurons. Involved in the control of neuronal cell differentiation. Plays a role in angiogenesis through regulation of endothelial cells chemotaxis. Also affects the migration, adhesion, and matrix/bone degradation in macrophages and osteoclasts. This is Pleckstrin homology domain-containing family G member 5 (Plekhg5) from Mus musculus (Mouse).